Here is a 214-residue protein sequence, read N- to C-terminus: Cytochrome b (214 aa).

4 helical membrane-spanning segments follow: residues 31 to 51 (FGSM…FLAI), 75 to 96 (WIMQ…YIHI), 111 to 131 (WLSG…GYVL), and 176 to 196 (FFAL…AHIL). Residues X81 and H95 each contribute to the heme b site. Heme b is bound by residues H180 and H194. Position 199 (H199) interacts with a ubiquinone.

Belongs to the cytochrome b family. The cytochrome bc1 complex contains 3 respiratory subunits (MT-CYB, CYC1 and UQCRFS1), 2 core proteins (UQCRC1 and UQCRC2) and probably 6 low-molecular weight proteins. Requires heme b as cofactor.

Its subcellular location is the mitochondrion inner membrane. In terms of biological role, component of the ubiquinol-cytochrome c reductase complex (complex III or cytochrome b-c1 complex) that is part of the mitochondrial respiratory chain. The b-c1 complex mediates electron transfer from ubiquinol to cytochrome c. Contributes to the generation of a proton gradient across the mitochondrial membrane that is then used for ATP synthesis. In Bothriechis schlegelii (Eyelash palm pitviper), this protein is Cytochrome b (MT-CYB).